A 693-amino-acid polypeptide reads, in one-letter code: Zinc finger BED domain-containing protein 5 (693 aa).

The BED-type zinc finger occupies 108–164; it reads RKYDESYLSFGFTYFGNRDAPHAQCVLCKKILSNSSLAPSKLRRHLETKHAAYKDKD. Residues C132, C135, H152, and H157 each contribute to the Zn(2+) site.

This Homo sapiens (Human) protein is Zinc finger BED domain-containing protein 5 (ZBED5).